Here is a 356-residue protein sequence, read N- to C-terminus: MRFQRRAMTLRQRLMLTIGLILLVFQLISTFWLWHESTEQIQLFEQALRDNRNNDRHIMHEIREAVASLIVPGVFMVSLTLLICYQAVRRITRPLAELQKELEARTADNLAPIAIHSSTLEIESVVSAINQLVTRLTTTLDNERLFTADVAHELRTPLSGVRLHLELLSKTHNVDVAPLIARLDQMMDSVSQLLQLARVGQSFSSGNYQEVKLLEDVILPSYDELNTMLETRQQTLLLPESAADVVVRGDATLLRMLLRNLVENAHRYSPEGTHITIHISADPDAIMAVEDEGPGIDESKCGKLSEAFVRMDSRYGGIGLGLSIVSRITQLHQGQFFLQNRTERTGTRAWVLLKKA.

The Cytoplasmic portion of the chain corresponds to 1–13 (MRFQRRAMTLRQR). A helical membrane pass occupies residues 14 to 34 (LMLTIGLILLVFQLISTFWLW). Residues 35-64 (HESTEQIQLFEQALRDNRNNDRHIMHEIRE) are Periplasmic-facing. Residues 65–88 (AVASLIVPGVFMVSLTLLICYQAV) form a helical membrane-spanning segment. The HAMP domain occupies 89 to 141 (RRITRPLAELQKELEARTADNLAPIAIHSSTLEIESVVSAINQLVTRLTTTLD). Residues 89 to 356 (RRITRPLAEL…TRAWVLLKKA (268 aa)) lie on the Cytoplasmic side of the membrane. The 208-residue stretch at 149–356 (DVAHELRTPL…TRAWVLLKKA (208 aa)) folds into the Histidine kinase domain. The residue at position 152 (H152) is a Phosphohistidine; by autocatalysis.

Post-translationally, autophosphorylated.

The protein resides in the cell inner membrane. It catalyses the reaction ATP + protein L-histidine = ADP + protein N-phospho-L-histidine.. In terms of biological role, member of the two-component regulatory system BasS/BasR. Autophosphorylates and activates BasR by phosphorylation. Plays a role in the adaptation of the organism to the host environment, in particular to neutrophils, and therefore it plays a role in virulence as well. The protein is Sensor protein BasS (basS) of Salmonella typhimurium (strain LT2 / SGSC1412 / ATCC 700720).